A 505-amino-acid polypeptide reads, in one-letter code: Lysine--tRNA ligase (505 aa).

Residues Glu415 and Glu422 each contribute to the Mg(2+) site.

The protein belongs to the class-II aminoacyl-tRNA synthetase family. Homodimer. Mg(2+) serves as cofactor.

The protein resides in the cytoplasm. It catalyses the reaction tRNA(Lys) + L-lysine + ATP = L-lysyl-tRNA(Lys) + AMP + diphosphate. The polypeptide is Lysine--tRNA ligase (Pectobacterium carotovorum subsp. carotovorum (strain PC1)).